Reading from the N-terminus, the 175-residue chain is Ribulose bisphosphate carboxylase small subunit, chloroplastic 2 (175 aa).

The N-terminal 46 residues, 1 to 46 (MAPTVMASSATSVAPFQGLKSTAGLPVSRRSTNSGFGNVSNGGRIK), are a transit peptide targeting the chloroplast.

This sequence belongs to the RuBisCO small chain family. Heterohexadecamer of 8 large and 8 small subunits.

It is found in the plastid. The protein localises to the chloroplast. Its function is as follows. RuBisCO catalyzes two reactions: the carboxylation of D-ribulose 1,5-bisphosphate, the primary event in carbon dioxide fixation, as well as the oxidative fragmentation of the pentose substrate. Both reactions occur simultaneously and in competition at the same active site. Although the small subunit is not catalytic it is essential for maximal activity. In Oryza sativa subsp. japonica (Rice), this protein is Ribulose bisphosphate carboxylase small subunit, chloroplastic 2.